The following is an 86-amino-acid chain: Muscarinic toxin 38 (86 aa).

A signal peptide spans 1-21 (MKTLLLTLVVVTIVCLDLGYT). Disulfide bonds link Cys24–Cys45, Cys38–Cys63, Cys67–Cys78, and Cys79–Cys84.

The protein belongs to the three-finger toxin family. Short-chain subfamily. Aminergic toxin sub-subfamily. In terms of assembly, monomer. In terms of tissue distribution, expressed by the venom gland.

Its subcellular location is the secreted. Binds to the muscarinic acetylcholine receptor (CHRM). This Ophiophagus hannah (King cobra) protein is Muscarinic toxin 38.